A 1384-amino-acid chain; its full sequence is MLRKLTVDQINDWFTIGKTVTNVELLGLPPAFPAEAPREEVQRSEEVPSEAPTAQAQDPVKATALARPASAFGRSLSQRSSEVEYINKYRQLEAQELDIYGQDQPPSGPGLRSPLAKISNVACIPETTYKYPDLPINRCKEEVISLIESNSVVIIHGATGSGKSTQLPQYVLDHYTQRSAFCNIVVTQPRKIGASSIARWISKERSWTLGGLVGYQVGLEKTATEDTRLIYMTTGVLLQKIVSAKSLMEFTHVFIDEVHERTEEMDFLLLVVRKLLRTNSRFVKVILMSATINCKQFADYFAVPVQNKMNPAYVFEVEGKPHTIEQYYLNDLGHIYHSGLPPYRLEEPVITKDVYEVAVSLIQMFDDLDMKESGNKTWSGAQFVSERSSVLVFLPGLGEINYMHELLTNMIHKRLQVYPLHSSVTLEEQNNVFLSPVPGYRKIILSTNIAESSVTVPDVKYVIDFCLTRTLVCDEDTNYQSLRLSWASKTSCDQRKGRAGRVSKGYCYRLIHRDFWDSAIPDHVVPEMLRCPLGSTVLKVKLLDMGEPRALLATALSPPSLSDIERTILLLKEVGALAVSGQREDENPHDGELTFLGRVLAQLPVSQQLGKLIVLGHVFGCLDECLIIAAALSLKNFFTMPFRQHLDGYRNKVHFSGSSRSDCLALVEAFRAWQACRQRGELRHPKDELDWGRLNYIQIKRIREVAELYEELKNRISQFNMFVDPRHPVLDQEYPYKQRFILQVVLAGAFYPNYFTFGQPDEEMAVRELAGRDPKTTVVLKHIPPYGFLYYKQLQSLFRQCGQVKSIVFDGAKAFVEFSRNPTERFKTLPAVNLAVKMSQLKVSLELSIHAAEEIEGKVQGGSVSKLRNTRVNVDFQKQTVDPMQVSFNTLDRPRTVADLLLTVDVTEVVEVGHFWGYRIDERNAELLRQLTAEINRLELVPLPIHPHPDLVCLAPFTDYNKESYFRAQILYVSGNSAEVFFVDYGNRSHVDLDLLREIPCQLLELPFQALEFKICKMRPSAKSLICGEHWSGGANGRFAALVSGCPLLVKVFSIVHSVLHVDVYRYSGAQDAVNIRDVLIREGYAELAEESYESKQSYEVLKGFFAKSVDTMPDGSVSSPMKDDEKHLIQILLESFASNRLGAPNCKAVLHGPFNPYELKCHSLTRISKFRCVWIEKESINSVVISDSPADLHQRMLVAASLSVNETGSTMLLRETSLMPHIPGLPALLSMLFAPVMELRVDREGKCYTGVLCGLGWNSTTEAPILPEHDIELAFDVCFNVEDIVEINILRAAINKLACDGPHGPKYLGPERIAQLQENARQKLLGLFCRLKPREKITPQWHEKPYEWNQVDPRLVIEQAEREGGPGKSTCLYQLHTPVVLSP.

The disordered stretch occupies residues 35 to 60 (EAPREEVQRSEEVPSEAPTAQAQDPV). Basic and acidic residues predominate over residues 36 to 46 (APREEVQRSEE). Positions 144 to 310 (ISLIESNSVV…FAVPVQNKMN (167 aa)) constitute a Helicase ATP-binding domain. ATP is bound at residue 157–164 (GATGSGKS). Positions 256-259 (DEVH) match the DEAH box motif. Residues 379–546 (SGAQFVSERS…VLKVKLLDMG (168 aa)) form the Helicase C-terminal domain. Positions 946 to 1006 (HPHPDLVCLA…REIPCQLLEL (61 aa)) constitute a Tudor domain.

This sequence belongs to the DEAD box helicase family. DEAH subfamily. In terms of assembly, interacts with piRNA-associated proteins PIWIL1 and PIWIL4.

The protein resides in the cytoplasm. The protein localises to the nucleus. The enzyme catalyses ATP + H2O = ADP + phosphate + H(+). Functionally, ATP-binding RNA helicase which plays a central role during spermatogenesis by repressing transposable elements and preventing their mobilization, which is essential for the germline integrity. Acts via the piRNA metabolic process, which mediates the repression of transposable elements during meiosis by forming complexes composed of piRNAs and Piwi proteins and governs the methylation and subsequent repression of transposons. Acts downstream of piRNA biogenesis: exclusively required for transposon silencing in the nucleus, suggesting that it acts as a nuclear effector in the nucleus together with PIWIL4. The polypeptide is ATP-dependent RNA helicase TDRD9 (Rattus norvegicus (Rat)).